A 355-amino-acid polypeptide reads, in one-letter code: Sesquiterpene synthase MAJ_08936 (355 aa).

Mg(2+)-binding residues include D91 and D96. The DDXXXD motif motif lies at 91–96 (DDLFVD). Substrate is bound at residue R184. N230, S234, and E238 together coordinate Mg(2+).

This sequence belongs to the terpene synthase family. The cofactor is Mg(2+).

The catalysed reaction is (2E,6E)-farnesyl diphosphate + H2O = (+)-corvol ether B + diphosphate. The enzyme catalyses (2E,6E)-farnesyl diphosphate + H2O = (+)-corvol ether A + diphosphate. Its function is as follows. Terpene synthase that catalyzes the conversion of (2E,6E)-farnesyl diphosphate (FPP) into sesquiterpenes which are important for fungi-environment interactions. Produces a mixture consisting of 8 sesquiterpenes including corvol ethers A and B, as well as traces of epizonarene, gamma-cadinene, delta-cadinene, alpha-cadinene, alpha-cadinol, and an unidentified sesquiterpene. The major product is corvol ether A. This is Sesquiterpene synthase MAJ_08936 from Metarhizium majus (strain ARSEF 297).